The chain runs to 265 residues: Probable ribose-5-phosphate isomerase 2 (265 aa).

Position 2 is an N-acetylalanine (alanine 2). Serine 96 is subject to Phosphoserine.

This sequence belongs to the ribose 5-phosphate isomerase family.

Its subcellular location is the cytoplasm. The catalysed reaction is aldehydo-D-ribose 5-phosphate = D-ribulose 5-phosphate. It functions in the pathway carbohydrate degradation; pentose phosphate pathway; D-ribose 5-phosphate from D-ribulose 5-phosphate (non-oxidative stage): step 1/1. In terms of biological role, catalyzes the reversible conversion of ribose-5-phosphate to ribulose 5-phosphate. This is Probable ribose-5-phosphate isomerase 2 (RPI2) from Arabidopsis thaliana (Mouse-ear cress).